Here is a 371-residue protein sequence, read N- to C-terminus: MPLFSHRFTTASSSSPASPSYYNKPSSKTHKPNSSSSSYTSSRIHVAIIFFSLVSVFIGVAGTIFALSSTGPASVYRCGGSKDTSRVVSASRKLGGDGGNNGVVVERRKLLGFVGIQTGFDSGDRRTALRSTWFPSDPDSLLRLEQATGLAFRFVIGKSKDAKKMAELEKEIKEYRDFVLLDTEEEYIRLPYKTLAFFKAAFKLFEADYYVKADDDIYLRPDRLATLLANERLHSQTYIGCMKKGPVITDPKLKWYEKQGNLIGNEYFLHAYGPIYVLSAEIVASLAAARNGSLRMFNNEDVTIGSWMLAMDVHHEDNRALCDPHCSPKSIAVWDIPKCSGLCDPESRLKELHKTDMCSKSPTLPPDDIDQ.

The segment at 1 to 36 is disordered; sequence MPLFSHRFTTASSSSPASPSYYNKPSSKTHKPNSSS. Low complexity predominate over residues 11 to 36; sequence ASSSSPASPSYYNKPSSKTHKPNSSS. A helical; Signal-anchor for type II membrane protein transmembrane segment spans residues 46-66; it reads VAIIFFSLVSVFIGVAGTIFA. A glycan (N-linked (GlcNAc...) asparagine) is linked at asparagine 291.

This sequence belongs to the glycosyltransferase 31 family. Requires Mn(2+) as cofactor.

It localises to the golgi apparatus membrane. It functions in the pathway protein modification; protein glycosylation. Beta-1,3-galactosyltransferase that transfers galactose from UDP-galactose to substrates with a terminal glycosyl residue. The sequence is that of Probable beta-1,3-galactosyltransferase 12 (B3GALT12) from Arabidopsis thaliana (Mouse-ear cress).